Here is a 337-residue protein sequence, read N- to C-terminus: Serpentine receptor class beta-6 (337 aa).

The next 7 membrane-spanning stretches (helical) occupy residues 20-40 (QFYTLLTSIFSVFPLLYLIIF), 62-82 (ILISVLNNCVVFAHHVVIPFL), 98-118 (IFQNIGVFGISCPMLTILGIT), 138-158 (IGVFIGVFAMLCDMALVYFFF), 183-203 (WLCYSLLAINSVNLVFNYFLV), 234-254 (TFISFIHVFFFSLYLIFTLII), and 273-293 (GVYITIPTYNLIIGIASCVIL).

This sequence belongs to the nematode receptor-like protein srb family. Expressed in the ADL, ADF and ASH chemosensory neurons in the head and in the PHA and PHB chemosensory neurons in the tail. Low expression also observed in the egg-laying structures in the mid-body region.

It is found in the cell membrane. Its function is as follows. Mediates recognition and avoidance of Streptomyces species by detecting dodecanoic acid secreted by the bacteria. Also mediates avoidance of decanoic acid which is not secreted by Streptomyces species but this may represent an additional important avoidance response in the environment. The sequence is that of Serpentine receptor class beta-6 (srb-6) from Caenorhabditis elegans.